The following is a 286-amino-acid chain: ATP synthase gamma chain (286 aa).

It belongs to the ATPase gamma chain family. F-type ATPases have 2 components, CF(1) - the catalytic core - and CF(0) - the membrane proton channel. CF(1) has five subunits: alpha(3), beta(3), gamma(1), delta(1), epsilon(1). CF(0) has three main subunits: a, b and c.

Its subcellular location is the cell membrane. In terms of biological role, produces ATP from ADP in the presence of a proton gradient across the membrane. The gamma chain is believed to be important in regulating ATPase activity and the flow of protons through the CF(0) complex. This chain is ATP synthase gamma chain, found in Ruminococcus albus (strain ATCC 27210 / DSM 20455 / JCM 14654 / NCDO 2250 / 7).